Here is a 100-residue protein sequence, read N- to C-terminus: Large ribosomal subunit protein eL21 (100 aa).

It belongs to the eukaryotic ribosomal protein eL21 family.

This chain is Large ribosomal subunit protein eL21, found in Pyrobaculum arsenaticum (strain DSM 13514 / JCM 11321 / PZ6).